The primary structure comprises 1165 residues: Symplekin (1165 aa).

HEAT repeat units lie at residues 23–58 (TATA…TVLG), 61–95 (AELA…QVCK), 98–140 (VELL…YLCS), 147–186 (SAEQ…GVVV), and 218–257 (KLQE…IAKM). The segment at 365 to 384 (DQQQREMELDTEELERQKQK) is disordered. The span at 367–384 (QQREMELDTEELERQKQK) shows a compositional bias: basic and acidic residues.

This sequence belongs to the Symplekin family. As to quaternary structure, interacts with Cpsf73 and Cpsf100 forming a core cleavage factor required for both polyadenylated and histone mRNA processing. Interacts with Slbp and Lsm11.

The protein resides in the nucleus. Functionally, component of a protein complex required for cotranscriptional processing of 3'-ends of polyadenylated and histone pre-mRNA. Involved in germline stem cell transit amplification, differentiation and mitosis-to-meiosis transition. The chain is Symplekin from Drosophila melanogaster (Fruit fly).